The following is a 196-amino-acid chain: Large ribosomal subunit protein mL66 (196 aa).

Residues 1–34 constitute a mitochondrion transit peptide; that stretch reads MAALNVLVSGCGRFLRGLLTGPTVTSWARPPARG.

It belongs to the bacterial ribosomal protein bS18 family. Mitochondrion-specific ribosomal protein mL66 subfamily. In terms of assembly, component of the mitochondrial ribosome small subunit (28S) which comprises a 12S rRNA and about 30 distinct proteins.

Its subcellular location is the mitochondrion. The polypeptide is Large ribosomal subunit protein mL66 (MRPS18A) (Bos taurus (Bovine)).